A 675-amino-acid polypeptide reads, in one-letter code: uncharacterized protein (675 aa).

This is an uncharacterized protein from Homo sapiens (Human).